Reading from the N-terminus, the 101-residue chain is CRISPR-associated endoribonuclease Cas2 (101 aa).

A Mg(2+)-binding site is contributed by Asp8.

It belongs to the CRISPR-associated endoribonuclease Cas2 protein family. In terms of assembly, homodimer, forms a heterotetramer with a Cas1 homodimer. Mg(2+) is required as a cofactor.

Its function is as follows. CRISPR (clustered regularly interspaced short palindromic repeat), is an adaptive immune system that provides protection against mobile genetic elements (viruses, transposable elements and conjugative plasmids). CRISPR clusters contain sequences complementary to antecedent mobile elements and target invading nucleic acids. CRISPR clusters are transcribed and processed into CRISPR RNA (crRNA). Functions as a ssRNA-specific endoribonuclease. Involved in the integration of spacer DNA into the CRISPR cassette. This Lacticaseibacillus rhamnosus (strain ATCC 53103 / LMG 18243 / GG) (Lactobacillus rhamnosus) protein is CRISPR-associated endoribonuclease Cas2.